We begin with the raw amino-acid sequence, 154 residues long: Large ribosomal subunit protein uL13 (154 aa).

It belongs to the universal ribosomal protein uL13 family. In terms of assembly, part of the 50S ribosomal subunit.

In terms of biological role, this protein is one of the early assembly proteins of the 50S ribosomal subunit, although it is not seen to bind rRNA by itself. It is important during the early stages of 50S assembly. The protein is Large ribosomal subunit protein uL13 of Bartonella tribocorum (strain CIP 105476 / IBS 506).